Reading from the N-terminus, the 50-residue chain is Putative protein HokF (50 aa).

Residues 5–25 form a helical membrane-spanning segment; that stretch reads YALVAVIVLCLTVPGFTLLVG.

The protein belongs to the Hok/Gef family.

It localises to the cell inner membrane. Functionally, toxic component of a type I toxin-antitoxin (TA) system. When overexpressed kills cells within minutes; causes collapse of the transmembrane potential and arrest of respiration. Its toxic effect is probably neutralized by an antisense antitoxin Sok RNA. The polypeptide is Putative protein HokF (hokF) (Escherichia coli O157:H7).